We begin with the raw amino-acid sequence, 815 residues long: (-)-kolavenyl diphosphate synthase TPS28, chloroplastic (815 aa).

The transit peptide at 1–51 (MFMSSSSSSHARRPQLSSFSYLHPPLPFPGLSFFNTRDKRVNFDSTRIICI) directs the protein to the chloroplast. K247 is a binding site for substrate. D379 and D381 together coordinate Mg(2+). The DXDD motif motif lies at 379-382 (DIDD). K465 contributes to the substrate binding site.

It belongs to the terpene synthase family. Tpsc subfamily. The cofactor is Mg(2+).

It is found in the plastid. Its subcellular location is the chloroplast. It catalyses the reaction (2E,6E,10E)-geranylgeranyl diphosphate = (-)-kolavenyl diphosphate. Its activity is regulated as follows. Inhibited by high concentrations of magnesium. Diterpene synthase that catalyzes the formation of (-)-kolavenyl diphosphate from geranylgeranyl diphosphate (GGPP). This chain is (-)-kolavenyl diphosphate synthase TPS28, chloroplastic, found in Tripterygium wilfordii (Thunder God vine).